Here is a 1236-residue protein sequence, read N- to C-terminus: ATP-dependent helicase/nuclease subunit A (1236 aa).

One can recognise a UvrD-like helicase ATP-binding domain in the interval 2-457 (AHWTIEQEEA…VDLNKNFRSH (456 aa)). Residue 23–30 (AAAGSGKT) participates in ATP binding. In terms of domain architecture, UvrD-like helicase C-terminal spans 515-816 (NTAKRVEICI…RIMSIHKSKG (302 aa)).

Belongs to the helicase family. AddA subfamily. In terms of assembly, heterodimer of AddA and AddB/RexB. The cofactor is Mg(2+).

It catalyses the reaction Couples ATP hydrolysis with the unwinding of duplex DNA by translocating in the 3'-5' direction.. The catalysed reaction is ATP + H2O = ADP + phosphate + H(+). In terms of biological role, the heterodimer acts as both an ATP-dependent DNA helicase and an ATP-dependent, dual-direction single-stranded exonuclease. Recognizes the chi site generating a DNA molecule suitable for the initiation of homologous recombination. The AddA nuclease domain is required for chi fragment generation; this subunit has the helicase and 3' -&gt; 5' nuclease activities. The polypeptide is ATP-dependent helicase/nuclease subunit A (Syntrophomonas wolfei subsp. wolfei (strain DSM 2245B / Goettingen)).